Here is a 412-residue protein sequence, read N- to C-terminus: Multifunctional CCA protein (412 aa).

ATP is bound by residues Gly-8 and Arg-11. CTP-binding residues include Gly-8 and Arg-11. Mg(2+) is bound by residues Asp-21 and Asp-23. ATP-binding residues include Arg-91, Arg-137, and Arg-140. CTP-binding residues include Arg-91, Arg-137, and Arg-140. In terms of domain architecture, HD spans 228 to 329; the sequence is TGIHTLMTLS…VKLFDSIDAW (102 aa).

Belongs to the tRNA nucleotidyltransferase/poly(A) polymerase family. Bacterial CCA-adding enzyme type 1 subfamily. As to quaternary structure, monomer. Can also form homodimers and oligomers. Mg(2+) is required as a cofactor. The cofactor is Ni(2+).

It carries out the reaction a tRNA precursor + 2 CTP + ATP = a tRNA with a 3' CCA end + 3 diphosphate. The catalysed reaction is a tRNA with a 3' CCA end + 2 CTP + ATP = a tRNA with a 3' CCACCA end + 3 diphosphate. In terms of biological role, catalyzes the addition and repair of the essential 3'-terminal CCA sequence in tRNAs without using a nucleic acid template. Adds these three nucleotides in the order of C, C, and A to the tRNA nucleotide-73, using CTP and ATP as substrates and producing inorganic pyrophosphate. tRNA 3'-terminal CCA addition is required both for tRNA processing and repair. Also involved in tRNA surveillance by mediating tandem CCA addition to generate a CCACCA at the 3' terminus of unstable tRNAs. While stable tRNAs receive only 3'-terminal CCA, unstable tRNAs are marked with CCACCA and rapidly degraded. In Escherichia coli O6:K15:H31 (strain 536 / UPEC), this protein is Multifunctional CCA protein.